Consider the following 187-residue polypeptide: Probable cobalt-precorrin-6B C(15)-methyltransferase (decarboxylating) (187 aa).

Residues T15, 39 to 43 (GSCTG), E60, and A89 each bind S-adenosyl-L-methionine.

It belongs to the methyltransferase superfamily. Archaeal-type CbiT family.

The catalysed reaction is Co-precorrin-6B + S-adenosyl-L-methionine = Co-precorrin-7 + S-adenosyl-L-homocysteine + CO2. Its pathway is cofactor biosynthesis; adenosylcobalamin biosynthesis; cob(II)yrinate a,c-diamide from sirohydrochlorin (anaerobic route): step 8/10. Its function is as follows. Catalyzes the methylation of C-15 in cobalt-precorrin-6B followed by the decarboxylation of C-12 to form cobalt-precorrin-7. This is Probable cobalt-precorrin-6B C(15)-methyltransferase (decarboxylating) from Halobacterium salinarum (strain ATCC 700922 / JCM 11081 / NRC-1) (Halobacterium halobium).